Reading from the N-terminus, the 184-residue chain is Protein GrpE (184 aa).

Basic and acidic residues predominate over residues 1–17; it reads MQHEDKTPEQQENKTPE. The tract at residues 1–39 is disordered; sequence MQHEDKTPEQQENKTPETELQQENAPATPQEAGAAGSID. The span at 18–27 shows a compositional bias: polar residues; that stretch reads TELQQENAPA.

This sequence belongs to the GrpE family. As to quaternary structure, homodimer.

Its subcellular location is the cytoplasm. Functionally, participates actively in the response to hyperosmotic and heat shock by preventing the aggregation of stress-denatured proteins, in association with DnaK and GrpE. It is the nucleotide exchange factor for DnaK and may function as a thermosensor. Unfolded proteins bind initially to DnaJ; upon interaction with the DnaJ-bound protein, DnaK hydrolyzes its bound ATP, resulting in the formation of a stable complex. GrpE releases ADP from DnaK; ATP binding to DnaK triggers the release of the substrate protein, thus completing the reaction cycle. Several rounds of ATP-dependent interactions between DnaJ, DnaK and GrpE are required for fully efficient folding. The chain is Protein GrpE from Methylobacillus flagellatus (strain ATCC 51484 / DSM 6875 / VKM B-1610 / KT).